We begin with the raw amino-acid sequence, 221 residues long: Lipoprotein-releasing system ATP-binding protein LolD (221 aa).

Residues 6–220 enclose the ABC transporter domain; sequence LILKNISKHY…YKLKHGLLNI (215 aa). Residue 42–49 participates in ATP binding; the sequence is GSSGSGKS.

Belongs to the ABC transporter superfamily. Lipoprotein translocase (TC 3.A.1.125) family. The complex is composed of two ATP-binding proteins (LolD) and two transmembrane proteins (LolC and LolE).

Its subcellular location is the cell inner membrane. Part of the ABC transporter complex LolCDE involved in the translocation of mature outer membrane-directed lipoproteins, from the inner membrane to the periplasmic chaperone, LolA. Responsible for the formation of the LolA-lipoprotein complex in an ATP-dependent manner. This chain is Lipoprotein-releasing system ATP-binding protein LolD, found in Rickettsia felis (strain ATCC VR-1525 / URRWXCal2) (Rickettsia azadi).